A 157-amino-acid polypeptide reads, in one-letter code: uncharacterized protein (157 aa).

The next 4 membrane-spanning stretches (helical) occupy residues 29-49 (LLIIPLLLLWGVSASFQPAYF), 52-72 (VLHVAISGILLLIGLACGFGI), 93-113 (LGSVILILVILSLRMAARTWL), and 117-137 (NEMFIAIIHSMFFVPLGTITA).

Its subcellular location is the cell membrane. This is an uncharacterized protein from Bacillus subtilis (strain 168).